A 181-amino-acid polypeptide reads, in one-letter code: Protein GrpE (181 aa).

Residues 1–13 show a composition bias toward polar residues; it reads MENTQENPATQSA. A disordered region spans residues 1–34; the sequence is MENTQENPATQSAEDIGSAKQAAQGAAPAAEAAD. Residues 19–34 show a composition bias toward low complexity; sequence AKQAAQGAAPAAEAAD.

This sequence belongs to the GrpE family. Homodimer.

The protein resides in the cytoplasm. Its function is as follows. Participates actively in the response to hyperosmotic and heat shock by preventing the aggregation of stress-denatured proteins, in association with DnaK and GrpE. It is the nucleotide exchange factor for DnaK and may function as a thermosensor. Unfolded proteins bind initially to DnaJ; upon interaction with the DnaJ-bound protein, DnaK hydrolyzes its bound ATP, resulting in the formation of a stable complex. GrpE releases ADP from DnaK; ATP binding to DnaK triggers the release of the substrate protein, thus completing the reaction cycle. Several rounds of ATP-dependent interactions between DnaJ, DnaK and GrpE are required for fully efficient folding. This is Protein GrpE from Burkholderia vietnamiensis (strain G4 / LMG 22486) (Burkholderia cepacia (strain R1808)).